A 145-amino-acid polypeptide reads, in one-letter code: MGKIWVLHGPNLNLLGRREPDKYGTQTLDEINNELLHKAHTAGIPIQVEQTNFEGELIQWIHSMGPDDFLIINPGAWTHYSYAVRDAITSVQVPTIEVHLSNIHAREEFRKTSVIAPVCCGQISGLGGKSYSLALDYALEALTQK.

The Proton acceptor role is filled by Tyr23. Asn73, His79, and Asp86 together coordinate substrate. His99 acts as the Proton donor in catalysis. Substrate is bound by residues 100 to 101 (LS) and Arg110.

This sequence belongs to the type-II 3-dehydroquinase family. As to quaternary structure, homododecamer.

The catalysed reaction is 3-dehydroquinate = 3-dehydroshikimate + H2O. The protein operates within metabolic intermediate biosynthesis; chorismate biosynthesis; chorismate from D-erythrose 4-phosphate and phosphoenolpyruvate: step 3/7. In terms of biological role, catalyzes a trans-dehydration via an enolate intermediate. The polypeptide is 3-dehydroquinate dehydratase (Desulfitobacterium hafniense (strain Y51)).